A 175-amino-acid polypeptide reads, in one-letter code: Protein ppBat (175 aa).

Residues Cys74 and Cys111 each coordinate Zn(2+). Riboflavin is bound by residues Asn161 and Trp164.

As to quaternary structure, homodimer.

Binds flavin derivatives, such as lumichrome, riboflavin, FMN, and FAD. May act as a flavin storage protein. Appears to lack proteolytic or chaperone activities. In Bacteroides thetaiotaomicron (strain ATCC 29148 / DSM 2079 / JCM 5827 / CCUG 10774 / NCTC 10582 / VPI-5482 / E50), this protein is Protein ppBat.